Reading from the N-terminus, the 198-residue chain is Adenylyl-sulfate kinase (198 aa).

Glycine 31 to serine 38 contacts ATP. Catalysis depends on serine 105, which acts as the Phosphoserine intermediate.

Belongs to the APS kinase family.

It carries out the reaction adenosine 5'-phosphosulfate + ATP = 3'-phosphoadenylyl sulfate + ADP + H(+). It participates in sulfur metabolism; hydrogen sulfide biosynthesis; sulfite from sulfate: step 2/3. In terms of biological role, catalyzes the synthesis of activated sulfate. The sequence is that of Adenylyl-sulfate kinase from Shewanella amazonensis (strain ATCC BAA-1098 / SB2B).